A 78-amino-acid chain; its full sequence is Large ribosomal subunit protein bL28 (78 aa).

A disordered region spans residues 1–21 (MSRVCQVTGKRPMSGNNRSHA).

Belongs to the bacterial ribosomal protein bL28 family.

The polypeptide is Large ribosomal subunit protein bL28 (Photorhabdus laumondii subsp. laumondii (strain DSM 15139 / CIP 105565 / TT01) (Photorhabdus luminescens subsp. laumondii)).